A 691-amino-acid polypeptide reads, in one-letter code: Pleckstrin homology domain-containing family G member 7 (691 aa).

Disordered regions lie at residues 1 to 48 (MEKT…ISTS) and 109 to 140 (TSEP…LQPV). Positions 313–488 (MIFMNTLRYL…EGKVKWLDNF (176 aa)) constitute a DH domain. Asparagine 395 is a glycosylation site (N-linked (GlcNAc...) asparagine). Positions 535 to 668 (HLLYEGKLTL…WMAQITTAIS (134 aa)) constitute a PH domain.

The polypeptide is Pleckstrin homology domain-containing family G member 7 (Homo sapiens (Human)).